The sequence spans 387 residues: Formate-dependent phosphoribosylglycinamide formyltransferase (387 aa).

N(1)-(5-phospho-beta-D-ribosyl)glycinamide-binding positions include 12 to 13 (EL) and glutamate 72. ATP-binding positions include arginine 104, lysine 145, 150-155 (SSGKGQ), 185-188 (EEFI), and glutamate 193. Residues 109–300 (DLAAKDLKLL…EFELHLRAIL (192 aa)) enclose the ATP-grasp domain. 2 residues coordinate Mg(2+): glutamate 258 and glutamate 270. N(1)-(5-phospho-beta-D-ribosyl)glycinamide-binding positions include aspartate 277, lysine 348, and 355–356 (RR).

It belongs to the PurK/PurT family. As to quaternary structure, homodimer.

The catalysed reaction is N(1)-(5-phospho-beta-D-ribosyl)glycinamide + formate + ATP = N(2)-formyl-N(1)-(5-phospho-beta-D-ribosyl)glycinamide + ADP + phosphate + H(+). The protein operates within purine metabolism; IMP biosynthesis via de novo pathway; N(2)-formyl-N(1)-(5-phospho-D-ribosyl)glycinamide from N(1)-(5-phospho-D-ribosyl)glycinamide (formate route): step 1/1. Its function is as follows. Involved in the de novo purine biosynthesis. Catalyzes the transfer of formate to 5-phospho-ribosyl-glycinamide (GAR), producing 5-phospho-ribosyl-N-formylglycinamide (FGAR). Formate is provided by PurU via hydrolysis of 10-formyl-tetrahydrofolate. The sequence is that of Formate-dependent phosphoribosylglycinamide formyltransferase from Leptospira interrogans serogroup Icterohaemorrhagiae serovar copenhageni (strain Fiocruz L1-130).